The following is a 60-amino-acid chain: Homeobox protein engrailed-like A (60 aa).

The segment at residues 1 to 41 (ADQLARLRAEFQANRYLTEERRQNLARELSLNEAQIKIWFQ) is a DNA-binding region (homeobox).

Belongs to the engrailed homeobox family.

The protein localises to the nucleus. In Myxine glutinosa (Atlantic hagfish), this protein is Homeobox protein engrailed-like A.